The primary structure comprises 534 residues: Light-independent protochlorophyllide reductase subunit B (534 aa).

Residue D36 participates in [4Fe-4S] cluster binding. The active-site Proton donor is the D274. 409–410 (GL) lines the substrate pocket. The tract at residues 426 to 446 (DEAGPSHHGGKAVPASAPRAD) is disordered.

The protein belongs to the ChlB/BchB/BchZ family. In terms of assembly, protochlorophyllide reductase is composed of three subunits; BchL, BchN and BchB. Forms a heterotetramer of two BchB and two BchN subunits. It depends on [4Fe-4S] cluster as a cofactor.

The catalysed reaction is chlorophyllide a + oxidized 2[4Fe-4S]-[ferredoxin] + 2 ADP + 2 phosphate = protochlorophyllide a + reduced 2[4Fe-4S]-[ferredoxin] + 2 ATP + 2 H2O. The protein operates within porphyrin-containing compound metabolism; bacteriochlorophyll biosynthesis (light-independent). In terms of biological role, component of the dark-operative protochlorophyllide reductase (DPOR) that uses Mg-ATP and reduced ferredoxin to reduce ring D of protochlorophyllide (Pchlide) to form chlorophyllide a (Chlide). This reaction is light-independent. The NB-protein (BchN-BchB) is the catalytic component of the complex. This chain is Light-independent protochlorophyllide reductase subunit B, found in Cereibacter sphaeroides (strain ATCC 17023 / DSM 158 / JCM 6121 / CCUG 31486 / LMG 2827 / NBRC 12203 / NCIMB 8253 / ATH 2.4.1.) (Rhodobacter sphaeroides).